A 610-amino-acid polypeptide reads, in one-letter code: Protein Spindly-B (610 aa).

A coiled-coil region spans residues 1–392 (MEESETVLKL…IDKVKDELSL (392 aa)). The disordered stretch occupies residues 474 to 610 (TEAHGVSDAT…KPATAQCPQQ (137 aa)). Basic and acidic residues-rich tracts occupy residues 493–511 (SDDKKLPKEDLSLSTKDQD) and 535–548 (RIMEDEKDTPDLNK). The segment covering 549–561 (RNPNNCTITSIHP) has biased composition (polar residues). The segment covering 570–583 (SELKKVDEEQEKRK) has biased composition (basic and acidic residues).

It belongs to the Spindly family.

It localises to the chromosome. The protein localises to the centromere. The protein resides in the kinetochore. Required for the localization of dynein and dynactin to the mitotic kintochore. Dynein is believed to control the initial lateral interaction between the kinetochore and spindle microtubules and to facilitate the subsequent formation of end-on kinetochore-microtubule attachments mediated by the NDC80 complex. This chain is Protein Spindly-B (spdl1-b), found in Xenopus laevis (African clawed frog).